The following is a 293-amino-acid chain: MKRIFQTIALIGKPRNPDALQTHKTLFDWLTGKGYDVLVDHRLANDLDVPQDCLCDLLTIGDKANLAIVVGGDGNMLGAARVLSRFDIAVIGVNRGNLGFLTDLDPESFKEELTRVLEGEFVTERRFLLEAEVHRHGQIKSRNAALNEAVLHPDKIAHMIEFEVYIDDNFAFSQRSDGLIIATPTGSTAYSLSGGGPILSPSLNAITLVPMFPHTLSSRPLVVDGDRCIKLLVSPNNGSTLEVSCDGQVSLPVSPGDEVHIYQSPEQLQLIHPKNYNYYGVLRAKLGWSSKLF.

The Proton acceptor role is filled by Asp73. NAD(+) is bound by residues 73-74, 147-148, His158, Arg175, Asp177, 188-193, and Gln248; these read DG, NE, and TAYSLS.

This sequence belongs to the NAD kinase family. A divalent metal cation is required as a cofactor.

It is found in the cytoplasm. The enzyme catalyses NAD(+) + ATP = ADP + NADP(+) + H(+). Involved in the regulation of the intracellular balance of NAD and NADP, and is a key enzyme in the biosynthesis of NADP. Catalyzes specifically the phosphorylation on 2'-hydroxyl of the adenosine moiety of NAD to yield NADP. This is NAD kinase from Photobacterium profundum (strain SS9).